The primary structure comprises 152 residues: ESAT-6 secretion machinery protein EssA (152 aa).

Topologically, residues 1–114 (MLMNSVIALT…PYIQNKQEKK (114 aa)) are cytoplasmic. The chain crosses the membrane as a helical span at residues 115-135 (IFPYILMSVGAFLTLGFVIFS). The Extracellular segment spans residues 136–152 (IHKGRRTKNESARKSNI).

The protein belongs to the EssA family.

The protein resides in the cell membrane. Functionally, component of the ESAT-6 secretion system (Ess). Required for the secretion of EsxA. The polypeptide is ESAT-6 secretion machinery protein EssA (Staphylococcus aureus (strain MRSA252)).